We begin with the raw amino-acid sequence, 442 residues long: MFLLVTYTIYSRVLTGDSRIPQSQDRQQSPTNDNNHEVYKVTKDGVYKQEVTGVVEEVEEEELKEVTTEDLYKSNVDIFDLNDYQGSQEGAKNGDILLFLMPLRNAEHVLPMAFYNLMNLTYDHRLIDIAFLVSDCSPDDTTLETVFEYSVALQNGTLVDKLKHEEELKNSGNVRGTSDLYQSYMEPSYIESVKKAYSNPESHHPNYRTPFRSVTIFKKDFGQVIGQGFSDRHAVKVQGIRRKLMGRARNWLTSAALKPYHSWVYWRDADIETCPGDVIEELMSHNYDVMVPNVWRPLPTFLGNEQPYDLNSWVESDAGLELAKTLNEDDVIVEGYAEYPTWRAHLAYIRDANGDPREVIDLDGVGGVSILARAKIFRQGVHFPAFTFLNHAETEAFGKMAKKMGFSVGGLPHYTIWHIYEPSEDDLKEIARLERKKRRQKS.

Belongs to the ANP1/MMN9/VAN1 family.

This Candida albicans (Yeast) protein is Vanadate resistance protein (VAN1).